The sequence spans 246 residues: MKKLVLVRHGQSQWNLENLFTGWTDVDLTEQGQKEAATAAQLLQKEGIFFQTAFTSYLKRAIKTLNIILDVMDLDWIDVHKTWRLNEKHYGALQGLNKKETAAQYGQEQVLLWRRSFDTAPAALEYSDARAPHNDRRYQRVARQDLPLTESLKDTIARIMPYWEVVIKPVLIAENTVLIVAHGNSLRAIIKHLKGISETEITDLNLPTGIPYVFEFDDDMNLCADYFLGDTEAIKKLQESVAKQSQ.

Substrate is bound by residues 8–15, 21–22, arginine 60, 87–90, lysine 98, 114–115, and 183–184; these read RHGQSQWN, TG, EKHY, RR, and GN. The Tele-phosphohistidine intermediate role is filled by histidine 9. Residue glutamate 87 is the Proton donor/acceptor of the active site.

It belongs to the phosphoglycerate mutase family. BPG-dependent PGAM subfamily. As to quaternary structure, homodimer.

The catalysed reaction is (2R)-2-phosphoglycerate = (2R)-3-phosphoglycerate. The protein operates within carbohydrate degradation; glycolysis; pyruvate from D-glyceraldehyde 3-phosphate: step 3/5. Catalyzes the interconversion of 2-phosphoglycerate and 3-phosphoglycerate. The polypeptide is 2,3-bisphosphoglycerate-dependent phosphoglycerate mutase (Dichelobacter nodosus (strain VCS1703A)).